The chain runs to 608 residues: UvrABC system protein C (608 aa).

Residues 15-93 (HQPGVYRMYN…IKQYLPKYNV (79 aa)) form the GIY-YIG domain. The region spanning 203–238 (RQVIQSLVEQMEGASQALNFEKAATIRDQIQSMRRV) is the UVR domain.

This sequence belongs to the UvrC family. Interacts with UvrB in an incision complex.

It localises to the cytoplasm. The UvrABC repair system catalyzes the recognition and processing of DNA lesions. UvrC both incises the 5' and 3' sides of the lesion. The N-terminal half is responsible for the 3' incision and the C-terminal half is responsible for the 5' incision. The polypeptide is UvrABC system protein C (Aliivibrio salmonicida (strain LFI1238) (Vibrio salmonicida (strain LFI1238))).